Consider the following 360-residue polypeptide: DNA replication and repair protein RecF (360 aa).

Position 30–37 (30–37 (GANGSGKT)) interacts with ATP.

Belongs to the RecF family.

It is found in the cytoplasm. In terms of biological role, the RecF protein is involved in DNA metabolism; it is required for DNA replication and normal SOS inducibility. RecF binds preferentially to single-stranded, linear DNA. It also seems to bind ATP. The protein is DNA replication and repair protein RecF of Acinetobacter baumannii (strain SDF).